Reading from the N-terminus, the 390-residue chain is Putative nickel insertion protein (390 aa).

The protein belongs to the LarC family.

The chain is Putative nickel insertion protein from Geotalea daltonii (strain DSM 22248 / JCM 15807 / FRC-32) (Geobacter daltonii).